We begin with the raw amino-acid sequence, 1170 residues long: Thrombospondin-2 (1170 aa).

Residues Met-1–Ala-18 form the signal peptide. Positions Gly-19 to Asn-215 constitute a Laminin G-like domain. The tract at residues Gly-19–Ala-232 is heparin-binding. 3 N-linked (GlcNAc...) asparagine glycosylation sites follow: Asn-151, Asn-316, and Asn-330. Positions Ser-318 to Val-375 constitute a VWFC domain. 3 consecutive TSP type-1 domains span residues Glu-379 to Asp-429, Asp-435 to Pro-490, and Asp-492 to Pro-547. Cystine bridges form between Cys-391–Cys-423, Cys-395–Cys-428, Cys-406–Cys-413, Cys-447–Cys-484, Cys-451–Cys-489, Cys-462–Cys-474, Cys-504–Cys-541, Cys-508–Cys-546, Cys-519–Cys-531, Cys-551–Cys-562, Cys-556–Cys-572, Cys-575–Cys-586, Cys-592–Cys-608, Cys-599–Cys-617, Cys-620–Cys-644, Cys-650–Cys-663, Cys-657–Cys-676, Cys-678–Cys-689, Cys-705–Cys-713, Cys-718–Cys-738, Cys-754–Cys-774, Cys-777–Cys-797, Cys-813–Cys-833, Cys-836–Cys-856, Cys-874–Cys-894, and Cys-910–Cys-930. Asn-455 carries N-linked (GlcNAc...) asparagine glycosylation. Positions Pro-547–Glu-587 constitute an EGF-like 1 domain. The N-linked (GlcNAc...) asparagine glycan is linked to Asn-582. The region spanning Pro-646–Gly-690 is the EGF-like 2 domain. TSP type-3 repeat units follow at residues Glu-691 to Gln-726, Glu-727 to Gln-762, Phe-763 to Gln-785, Ile-786 to Gln-821, Arg-822 to Gln-844, Thr-845 to Gln-882, Ala-883 to Gln-918, and Glu-919 to Glu-954. N-linked (GlcNAc...) asparagine glycosylation is present at Asn-708. The interval Lys-731–Glu-750 is disordered. The segment covering Ala-737–Val-747 has biased composition (acidic residues). The tract at residues Asn-841–Asp-944 is disordered. Acidic residues-rich tracts occupy residues Thr-845–Glu-864 and Cys-894–Ile-903. A compositionally biased stretch (basic and acidic residues) spans Gly-923–Asp-933. The Cell attachment site signature appears at Arg-926–Asp-928. Acidic residues predominate over residues Phe-934–Asp-944. N-linked (GlcNAc...) asparagine glycosylation is found at Asn-936 and Asn-1067. Cys-946 and Cys-1167 are disulfide-bonded. Residues Arg-958–Val-1170 enclose the TSP C-terminal domain.

The protein belongs to the thrombospondin family. Homotrimer; disulfide-linked. Can bind to fibrinogen, fibronectin, laminin and type V collagen. Interacts (via the TSP type I repeats) with CD36; the interaction conveys an antiangiogenic effect. Interacts (via the TSP type I repeats) with HRG; the interaction blocks the antiangiogenic effect of THBS2 with CD36.

Functionally, adhesive glycoprotein that mediates cell-to-cell and cell-to-matrix interactions. Ligand for CD36 mediating antiangiogenic properties. The chain is Thrombospondin-2 (THBS2) from Bos taurus (Bovine).